A 109-amino-acid chain; its full sequence is Large ribosomal subunit protein uL23 (109 aa).

The protein belongs to the universal ribosomal protein uL23 family. In terms of assembly, part of the 50S ribosomal subunit. Contacts protein L29, and trigger factor when it is bound to the ribosome.

Functionally, one of the early assembly proteins it binds 23S rRNA. One of the proteins that surrounds the polypeptide exit tunnel on the outside of the ribosome. Forms the main docking site for trigger factor binding to the ribosome. The protein is Large ribosomal subunit protein uL23 of Chlorobium phaeobacteroides (strain BS1).